We begin with the raw amino-acid sequence, 425 residues long: tRNA(Met) cytidine acetate ligase (425 aa).

ATP is bound by residues 7–20 (VVEY…HLHH), Gly-102, Asn-162, and 187–188 (RI).

It belongs to the TmcAL family.

Its subcellular location is the cytoplasm. It carries out the reaction cytidine(34) in elongator tRNA(Met) + acetate + ATP = N(4)-acetylcytidine(34) in elongator tRNA(Met) + AMP + diphosphate. Its function is as follows. Catalyzes the formation of N(4)-acetylcytidine (ac(4)C) at the wobble position of elongator tRNA(Met), using acetate and ATP as substrates. First activates an acetate ion to form acetyladenylate (Ac-AMP) and then transfers the acetyl group to tRNA to form ac(4)C34. The sequence is that of tRNA(Met) cytidine acetate ligase from Fervidobacterium nodosum (strain ATCC 35602 / DSM 5306 / Rt17-B1).